We begin with the raw amino-acid sequence, 425 residues long: Tyrosine--tRNA ligase (425 aa).

Y37 is an L-tyrosine binding site. The short motif at 42 to 51 (PTADSLHLGH) is the 'HIGH' region element. 2 residues coordinate L-tyrosine: Y174 and Q178. A 'KMSKS' region motif is present at residues 234–238 (KFGKS). An ATP-binding site is contributed by K237. The 66-residue stretch at 357–422 (DGLIDALAAS…RGKKLYALLV (66 aa)) folds into the S4 RNA-binding domain.

This sequence belongs to the class-I aminoacyl-tRNA synthetase family. TyrS type 1 subfamily. In terms of assembly, homodimer.

Its subcellular location is the cytoplasm. It catalyses the reaction tRNA(Tyr) + L-tyrosine + ATP = L-tyrosyl-tRNA(Tyr) + AMP + diphosphate + H(+). Its function is as follows. Catalyzes the attachment of tyrosine to tRNA(Tyr) in a two-step reaction: tyrosine is first activated by ATP to form Tyr-AMP and then transferred to the acceptor end of tRNA(Tyr). The chain is Tyrosine--tRNA ligase from Laribacter hongkongensis (strain HLHK9).